Reading from the N-terminus, the 594-residue chain is Beta-mannosyltransferase 3 (594 aa).

Residues 1-6 (MRIRSN) are Cytoplasmic-facing. Residues 7 to 27 (VLLLSTAGALALVWFAVVFSW) form a helical membrane-spanning segment. The Extracellular portion of the chain corresponds to 28-594 (DDKSIFGIPT…KDEVKDTKAK (567 aa)). Asparagine 305 is a glycosylation site (N-linked (GlcNAc...) asparagine). Residues 512–594 (VTRGEEDRLK…KDEVKDTKAK (83 aa)) adopt a coiled-coil conformation. Over residues 517-558 (EDRLKNKEKERKIEEKRKKEEERKKKEEEKKKKEEEEKKKKE) the composition is skewed to basic and acidic residues. The segment at 517-564 (EDRLKNKEKERKIEEKRKKEEERKKKEEEKKKKEEEEKKKKEEEEEEE) is disordered.

Belongs to the BMT family.

Its subcellular location is the membrane. Functionally, beta-mannosyltransferase involved in cell wall biosynthesis. This Komagataella phaffii (strain ATCC 76273 / CBS 7435 / CECT 11047 / NRRL Y-11430 / Wegner 21-1) (Yeast) protein is Beta-mannosyltransferase 3 (BMT3).